Reading from the N-terminus, the 350-residue chain is Probable V-type proton ATPase subunit d 2 (350 aa).

It belongs to the V-ATPase V0D/AC39 subunit family. V-ATPase is a heteromultimeric enzyme made up of two complexes: the ATP-hydrolytic V1 complex and the proton translocation V0 complex. The V1 complex consists of three catalytic AB heterodimers that form a heterohexamer, three peripheral stalks each consisting of EG heterodimers, one central rotor including subunits D and F, and the regulatory subunits C and H. The proton translocation complex V0 consists of the proton transport subunit a, a ring of proteolipid subunits c9c'', rotary subunit d, subunits e and f, and the accessory subunits VhaAC45 and ATP6AP2.

Functionally, subunit of the V0 complex of vacuolar(H+)-ATPase (V-ATPase), a multisubunit enzyme composed of a peripheral complex (V1) that hydrolyzes ATP and a membrane integral complex (V0) that translocates protons. V-ATPase is responsible for acidifying and maintaining the pH of intracellular compartments and in some cell types, is targeted to the plasma membrane, where it is responsible for acidifying the extracellular environment. May play a role in coupling of proton transport and ATP hydrolysis. This is Probable V-type proton ATPase subunit d 2 (VhaAC39-2) from Drosophila melanogaster (Fruit fly).